The sequence spans 215 residues: NAD(P)H-quinone oxidoreductase subunit I (215 aa).

4Fe-4S ferredoxin-type domains follow at residues 55–84 and 95–124; these read GRIHYEFDKCIACEVCVRVCPINLPVVDWV and RNYSIDFGVCIFCGNCVEYCPTNCLSMTEE. [4Fe-4S] cluster is bound by residues Cys-64, Cys-67, Cys-70, Cys-74, Cys-104, Cys-107, Cys-110, and Cys-114. The segment at 166–215 is disordered; that stretch reads AGEMDPHGVPNDRPRAGQLPSQVLETLAPPAKVGAKNEGQSTGTTQEGEA. The span at 169-180 shows a compositional bias: basic and acidic residues; that stretch reads MDPHGVPNDRPR. The span at 203–215 shows a compositional bias: polar residues; it reads EGQSTGTTQEGEA.

It belongs to the complex I 23 kDa subunit family. In terms of assembly, NDH-1 is composed of at least 11 different subunits. [4Fe-4S] cluster is required as a cofactor.

The protein localises to the cellular thylakoid membrane. The enzyme catalyses a plastoquinone + NADH + (n+1) H(+)(in) = a plastoquinol + NAD(+) + n H(+)(out). The catalysed reaction is a plastoquinone + NADPH + (n+1) H(+)(in) = a plastoquinol + NADP(+) + n H(+)(out). Functionally, NDH-1 shuttles electrons from an unknown electron donor, via FMN and iron-sulfur (Fe-S) centers, to quinones in the respiratory and/or the photosynthetic chain. The immediate electron acceptor for the enzyme in this species is believed to be plastoquinone. Couples the redox reaction to proton translocation, and thus conserves the redox energy in a proton gradient. The chain is NAD(P)H-quinone oxidoreductase subunit I from Parasynechococcus marenigrum (strain WH8102).